A 275-amino-acid chain; its full sequence is Glucosamine-6-phosphate deaminase 2 (275 aa).

Aspartate 72 (proton acceptor; for enolization step) is an active-site residue. The stretch at 103 to 131 (NAHILDGNASDLQAECEDFERKIKEAGGI) forms a coiled coil. The For ring-opening step role is filled by aspartate 141. Histidine 143 functions as the Proton acceptor; for ring-opening step in the catalytic mechanism. Glutamate 148 (for ring-opening step) is an active-site residue.

Belongs to the glucosamine/galactosamine-6-phosphate isomerase family. In terms of assembly, homohexamer.

The protein localises to the cytoplasm. It carries out the reaction alpha-D-glucosamine 6-phosphate + H2O = beta-D-fructose 6-phosphate + NH4(+). Its function is as follows. Catalyzes the reversible conversion of alpha-D-glucosamine 6-phosphate (GlcN-6P) into beta-D-fructose 6-phosphate (Fru-6P) and ammonium ion, a regulatory reaction step in de novo uridine diphosphate-N-acetyl-alpha-D-glucosamine (UDP-GlcNAc) biosynthesis via hexosamine pathway. This chain is Glucosamine-6-phosphate deaminase 2, found in Xenopus tropicalis (Western clawed frog).